Here is a 245-residue protein sequence, read N- to C-terminus: 4-hydroxy-tetrahydrodipicolinate reductase (245 aa).

Residues 7-12, 75-77, and 102-105 each bind NAD(+); these read GAKGKV, GTT, and APNF. Residue histidine 132 is the Proton donor/acceptor of the active site. Residue histidine 133 coordinates (S)-2,3,4,5-tetrahydrodipicolinate. Lysine 136 (proton donor) is an active-site residue. 142–143 contacts (S)-2,3,4,5-tetrahydrodipicolinate; it reads GT.

This sequence belongs to the DapB family.

Its subcellular location is the cytoplasm. The enzyme catalyses (S)-2,3,4,5-tetrahydrodipicolinate + NAD(+) + H2O = (2S,4S)-4-hydroxy-2,3,4,5-tetrahydrodipicolinate + NADH + H(+). It catalyses the reaction (S)-2,3,4,5-tetrahydrodipicolinate + NADP(+) + H2O = (2S,4S)-4-hydroxy-2,3,4,5-tetrahydrodipicolinate + NADPH + H(+). Its pathway is amino-acid biosynthesis; L-lysine biosynthesis via DAP pathway; (S)-tetrahydrodipicolinate from L-aspartate: step 4/4. Functionally, catalyzes the conversion of 4-hydroxy-tetrahydrodipicolinate (HTPA) to tetrahydrodipicolinate. This chain is 4-hydroxy-tetrahydrodipicolinate reductase, found in Mycobacterium tuberculosis (strain ATCC 25177 / H37Ra).